The primary structure comprises 356 residues: Glutamine synthetase cytosolic isozyme (356 aa).

Residues 19-99 enclose the GS beta-grasp domain; that stretch reads IIAEYIWIGG…VMCDAYTPAG (81 aa). Residues 38 to 66 form a disordered region; sequence RTLPGPVTDPSQLPKWNYDGSSTGQAPGE. The 251-residue stretch at 106 to 356 folds into the GS catalytic domain; that stretch reads KRHAAAKIFS…IADTTILWKP (251 aa).

The protein belongs to the glutamine synthetase family. As to quaternary structure, homooctamer.

It localises to the cytoplasm. The catalysed reaction is L-glutamate + NH4(+) + ATP = L-glutamine + ADP + phosphate + H(+). This Medicago sativa (Alfalfa) protein is Glutamine synthetase cytosolic isozyme.